The following is a 512-amino-acid chain: GMP synthase [glutamine-hydrolyzing] (512 aa).

Positions 5–195 constitute a Glutamine amidotransferase type-1 domain; that stretch reads GIVILDFGSQ…IFGIAKAEKN (191 aa). Residue Cys82 is the Nucleophile of the active site. Active-site residues include His169 and Glu171. A GMPS ATP-PPase domain is found at 196 to 387; that stretch reads WSMENYIEST…LGIPDYMVDR (192 aa). 223 to 229 is an ATP binding site; that stretch reads SGGVDSS.

In terms of assembly, homodimer.

It catalyses the reaction XMP + L-glutamine + ATP + H2O = GMP + L-glutamate + AMP + diphosphate + 2 H(+). It functions in the pathway purine metabolism; GMP biosynthesis; GMP from XMP (L-Gln route): step 1/1. In terms of biological role, catalyzes the synthesis of GMP from XMP. The protein is GMP synthase [glutamine-hydrolyzing] of Fusobacterium nucleatum subsp. nucleatum (strain ATCC 25586 / DSM 15643 / BCRC 10681 / CIP 101130 / JCM 8532 / KCTC 2640 / LMG 13131 / VPI 4355).